The primary structure comprises 393 residues: Elongation factor Tu (393 aa).

The tr-type G domain occupies 10–203; it reads KPHVNIGTIG…AVDNYIPEPV (194 aa). Residues 19-26 form a G1 region; sequence GHVDHGKT. 19–26 is a GTP binding site; the sequence is GHVDHGKT. Residue threonine 26 coordinates Mg(2+). Positions 60–64 are G2; that stretch reads GITIS. The interval 81–84 is G3; sequence DCPG. Residues 81–85 and 136–139 each bind GTP; these read DCPGH and NKVD. The interval 136–139 is G4; sequence NKVD. Residues 173–175 are G5; sequence SAL.

This sequence belongs to the TRAFAC class translation factor GTPase superfamily. Classic translation factor GTPase family. EF-Tu/EF-1A subfamily. As to quaternary structure, monomer.

The protein resides in the cytoplasm. It catalyses the reaction GTP + H2O = GDP + phosphate + H(+). Its function is as follows. GTP hydrolase that promotes the GTP-dependent binding of aminoacyl-tRNA to the A-site of ribosomes during protein biosynthesis. This chain is Elongation factor Tu, found in Chlorobium phaeovibrioides (strain DSM 265 / 1930) (Prosthecochloris vibrioformis (strain DSM 265)).